The chain runs to 619 residues: MEVEAAEARSPAPGYKRSGRRYKCLSCTKTFPNAPRAARHAATHGPADCSEEVAEVKPKPETEAKAEEASGEKVSGSAAKPRPYACPLCPKAYKTAPELRSHGRSHTGEKPFPCPECGRRFMQPVCLRVHLASHAGELPFRCAHCPKAYGALSKLKIHQRGHTGERPYACADCGKSFADPSVFRKHRRTHAGLRPYSCERCGKAYAELKDLRNHERSHTGERPFLCSECGKSFSRSSSLTCHQRIHAAQKPYRCPACGKGFTQLSSYQSHERTHSGEKPFLCPRCGRMFSDPSSFRRHQRAHEGVKPYHCEKCGKDFRQPADLAMHRRVHTGDRPFKCLQCDKTFVASWDLKRHALVHSGQRPFRCEECGRAFAERASLTKHSRVHSGERPFHCNACGKSFVVSSSLRKHERTHRSSEAAGVPPAQELVVGLALPVGVAGESSAAPAAGAGLGDPPAGLLGLPPESGGVMATQWQVVGMTVEHVECQDAGVREAPGPLEGAGEAGGEEADEKPPQFVCRECKETFSTMTLLRRHERSHPELRPFPCTQCGKSFSDRAGLRKHSRTHSSVRPYTCPHCPKAFLSASDLRKHERTHPVPMGTPTPLEPLVALLGMPEEGPA.

Met-1 bears the N-acetylmethionine mark. At Ser-10 the chain carries Phosphoserine. Residues 22 to 44 (YKCLSCTKTFPNAPRAARHAATH) form a C2H2-type 1 zinc finger. The interval 34 to 79 (APRAARHAATHGPADCSEEVAEVKPKPETEAKAEEASGEKVSGSAA) is disordered. The segment covering 54–71 (AEVKPKPETEAKAEEASG) has biased composition (basic and acidic residues). Glycyl lysine isopeptide (Lys-Gly) (interchain with G-Cter in SUMO2) cross-links involve residues Lys-57, Lys-59, Lys-65, and Lys-80. 11 C2H2-type zinc fingers span residues 84-106 (YACP…GRSH), 112-134 (FPCP…LASH), 140-162 (FRCA…QRGH), 168-190 (YACA…RRTH), 196-218 (YSCE…ERSH), 224-246 (FLCS…QRIH), 252-274 (YRCP…ERTH), 280-302 (FLCP…QRAH), 308-330 (YHCE…RRVH), 336-358 (FKCL…ALVH), and 364-386 (FRCE…SRVH). A Glycyl lysine isopeptide (Lys-Gly) (interchain with G-Cter in SUMO2) cross-link involves residue Lys-154. Ser-387 carries the post-translational modification Phosphoserine. The segment at 392-414 (FHCNACGKSFVVSSSLRKHERTH) adopts a C2H2-type 13 zinc-finger fold. Residues 492-513 (REAPGPLEGAGEAGGEEADEKP) are disordered. A Glycyl lysine isopeptide (Lys-Gly) (interchain with G-Cter in SUMO2) cross-link involves residue Lys-512. 3 consecutive C2H2-type zinc fingers follow at residues 516-538 (FVCR…ERSH), 544-566 (FPCT…SRTH), and 572-594 (YTCP…ERTH).

It belongs to the krueppel C2H2-type zinc-finger protein family.

It is found in the nucleus. Its function is as follows. May be involved in transcriptional regulation. May play a role in DNA repair process. The sequence is that of Zinc finger protein 668 (ZNF668) from Homo sapiens (Human).